The sequence spans 350 residues: N-acetyllactosaminide beta-1,3-N-acetylglucosaminyltransferase 4 (350 aa).

The Cytoplasmic portion of the chain corresponds to 1–4 (MLPR). A helical; Signal-anchor for type II membrane protein transmembrane segment spans residues 5-25 (LGCVLFCSLVVLLLSCLLLLK). The Lumenal segment spans residues 26 to 350 (ERIPAGSSKA…RLKCAATHKP (325 aa)). Asn53 and Asn166 each carry an N-linked (GlcNAc...) asparagine glycan.

It belongs to the glycosyltransferase 31 family.

It is found in the golgi apparatus membrane. The catalysed reaction is a beta-D-galactosyl-(1-&gt;4)-N-acetyl-beta-D-glucosaminyl derivative + UDP-N-acetyl-alpha-D-glucosamine = an N-acetyl-beta-D-glucosaminyl-(1-&gt;3)-beta-D-galactosyl-(1-&gt;4)-N-acetyl-beta-D-glucosaminyl derivative + UDP + H(+). It participates in protein modification; protein glycosylation. Functionally, beta-1,3-N-acetylglucosaminyltransferase involved in the synthesis of poly-N-acetyllactosamine. Has activity for type 2 oligosaccharides. The chain is N-acetyllactosaminide beta-1,3-N-acetylglucosaminyltransferase 4 (B3gnt4) from Mus musculus (Mouse).